Consider the following 866-residue polypeptide: Dynamin-2 (866 aa).

Positions His28 to Pro294 constitute a Dynamin-type G domain. The G1 motif stretch occupies residues Gly38–Ser45. The GDP site is built by Ser41, Gly43, Lys44, Ser45, Ser46, Arg59, and Gly60. A G2 motif region spans residues Val64–Arg66. Positions Asp136 to Gly139 are G3 motif. The G4 motif stretch occupies residues Thr205–Asp208. GDP is bound by residues Lys206, Asp208, and Asp211. A Phosphotyrosine modification is found at Tyr231. The G5 motif stretch occupies residues Val235 to Ser238. Residues Asn236, Arg237, and Gln239 each contribute to the GDP site. Lys299 carries the post-translational modification N6-acetyllysine. One can recognise a PH domain in the interval Gln515–Val621. At Tyr593 the chain carries Phosphotyrosine. The residue at position 594 (Lys594) is an N6-acetyllysine. Residues Val649–Val740 form the GED domain. The disordered stretch occupies residues Thr737–Asp866. Residue Thr751 is modified to Phosphothreonine. Positions Trp752–Pro763 are enriched in polar residues. At Ser760 the chain carries Phosphoserine; by CDK1. Composition is skewed to pro residues over residues Thr784–Val794, Pro802–His811, and Ser822–Pro851.

It belongs to the TRAFAC class dynamin-like GTPase superfamily. Dynamin/Fzo/YdjA family. Oligomerizes into a helical polymer that self-assembles around the vesicle membrane, when associated to the menbrane through lipid binding. Interacts with SHANK1 and SHANK2. Interacts with SNX9. Interacts (via C-terminal proline-rich domain (PRD)) with SNX18 (via SH3 domain); this interaction regulates ATG9A and ATG16L1 trafficking from recycling endosomes to sites of autophagosome formation. Interacts with SNX33 (via SH3 domain). Interacts with MYO1E (via SH3 domain). Interacts with PSTPIP1 (via SH3 domain). Interacts with CTNND2. Interacts (via C-terminal proline-rich domain (PRD)) with BIN1 (via SH3 domain); this interaction allows the recruitment of DNM2 to the membrane tubules and inhibits self-assembly-stimulated GTPase activity on the membrane. Interacts with GABARAP, GABARAPL1 and GABARAPL2. Interacts with MAP1LC3B (the lipidate and non-lipidated LC3 form); this interaction mediates recycling endosome scission leading to autophagosome release. Interacts with ITSN1. Interacts with MYOF. Interacts (via C-terminal proline-rich domain (PRD)) with SH3BP4 (via SH3 domain); this interaction controls the GTPase activity and is prevented by EGFR-induced tyrosine phosphorylation of either DNM2 or SH3BP4. May interact with PIK3C3. May be a component of a complex composed of RAB5A (in GDP-bound form), DYN2 and PIK3C3. Interacts with SDC4; this interaction is markedly enhanced at focal ahesion site upon induction of focal adhesions and stress-fiber formation. Interacts with ACTN1. Interacts with CTTN; this interaction stimulates the intrinsic GTPase activity of DNM2 and stabilizes the association of DNM2 and actin filaments; in addition this interaction is stimulated by ligand binding to the receptor, leading to the recruitment of the DNM2-CTTN complex to the sequestered receptor-ligand complex to its internalization. Interacts with NOSTRIN (via SH3 domain); this interaction allows the recruitment of NOS3 to dynamin-positive structures. Interacts with TUBG1; this interaction may participate in centrosome cohesion. Phosphorylation at Ser-844 by GSK3-alpha relieves the inhibition of BIN1 and promotes endocytosis. Phosphorylation at Ser-760 by CDK1 is greatly increased upon mitotic entry. It regulates cytokinesis downstream of calcineurin, and does not affect clathrin-mediated endocytosis. Dephosphorylated by calcineurin/PP2 during cytokinesis in a Ca(2+)- and calmodulin-dependent manner. Phosphorylated on tyrosine residues by EGFR and after activation of SRC.

Its subcellular location is the cytoplasm. The protein resides in the cytoskeleton. It is found in the cytoplasmic vesicle. The protein localises to the clathrin-coated vesicle. It localises to the cell projection. Its subcellular location is the uropodium. The protein resides in the endosome. It is found in the microtubule organizing center. The protein localises to the centrosome. It localises to the centriole. Its subcellular location is the recycling endosome. The protein resides in the phagocytic cup. It is found in the phagosome membrane. The protein localises to the podosome. It localises to the cell junction. Its subcellular location is the postsynaptic density. The protein resides in the synapse. It is found in the synaptosome. The protein localises to the midbody. It localises to the membrane. Its subcellular location is the clathrin-coated pit. It catalyses the reaction GTP + H2O = GDP + phosphate + H(+). Functionally, catalyzes the hydrolysis of GTP and utilizes this energy to mediate vesicle scission at plasma membrane during endocytosis and filament remodeling at many actin structures during organization of the actin cytoskeleton. Plays an important role in vesicular trafficking processes, namely clathrin-mediated endocytosis (CME), exocytic and clathrin-coated vesicle from the trans-Golgi network, and PDGF stimulated macropinocytosis. During vesicular trafficking process, associates to the membrane, through lipid binding, and self-assembles into ring-like structure through oligomerization to form a helical polymer around the vesicle membrane and leading to vesicle scission. Plays a role in organization of the actin cytoskeleton by mediating arrangement of stress fibers and actin bundles in podocytes. During organization of the actin cytoskeleton, self-assembles into ring-like structure that directly bundles actin filaments to form typical membrane tubules decorated with dynamin spiral polymers. Self-assembly increases GTPase activity and the GTP hydrolysis causes the rapid depolymerization of dynamin spiral polymers, and results in dispersion of actin bundles. Remodels, through its interaction with CTTN, bundled actin filaments in a GTPase-dependent manner and plays a role in orchestrating the global actomyosin cytoskeleton. The interaction with CTTN stabilizes the interaction of DNM2 and actin filaments and stimulates the intrinsic GTPase activity that results in actin filament-barbed ends and increases the sensitivity of filaments in bundles to the actin depolymerizing factor, CFL1. Plays a role in the autophagy process, by participating in the formation of ATG9A vesicles destined for the autophagosomes through its interaction with SNX18, by mediating recycling endosome scission leading to autophagosome release through MAP1LC3B interaction. Also regulates maturation of apoptotic cell corpse-containing phagosomes by recruiting PIK3C3 to the phagosome membrane. Also plays a role in cytokinesis. May participate in centrosome cohesion through its interaction with TUBG1. Plays a role in the regulation of neuron morphology, axon growth and formation of neuronal growth cones. Involved in membrane tubulation. This chain is Dynamin-2, found in Bos taurus (Bovine).